Here is a 248-residue protein sequence, read N- to C-terminus: Small ribosomal subunit protein uS5 (248 aa).

The segment at 1–87 (MEDKKLSSAK…NPRFQRNNKD (87 aa)) is disordered. Over residues 8 to 23 (SAKPATSSKPAPKAPS) the composition is skewed to low complexity. Positions 57–87 (VAFEKRNFTSGDKTKKPTDSKNPRFQRNNKD) are enriched in basic and acidic residues. Residues 94-157 (YEEKIVDIAR…KDAHNNLVEV (64 aa)) enclose the S5 DRBM domain.

This sequence belongs to the universal ribosomal protein uS5 family. In terms of assembly, part of the 30S ribosomal subunit. Contacts proteins S4 and S8.

In terms of biological role, with S4 and S12 plays an important role in translational accuracy. Functionally, located at the back of the 30S subunit body where it stabilizes the conformation of the head with respect to the body. The polypeptide is Small ribosomal subunit protein uS5 (Mycoplasmopsis synoviae (strain 53) (Mycoplasma synoviae)).